A 479-amino-acid polypeptide reads, in one-letter code: Adenosylhomocysteinase (479 aa).

Residues T65, D145, and E205 each coordinate substrate. Residue 206-208 coordinates NAD(+); the sequence is TTT. Substrate contacts are provided by K235 and D239. NAD(+)-binding positions include N240, 269–274, E292, N327, 348–350, and N393; these read GYGDVG and IGH.

The protein belongs to the adenosylhomocysteinase family. NAD(+) serves as cofactor.

The protein resides in the cytoplasm. The catalysed reaction is S-adenosyl-L-homocysteine + H2O = L-homocysteine + adenosine. The protein operates within amino-acid biosynthesis; L-homocysteine biosynthesis; L-homocysteine from S-adenosyl-L-homocysteine: step 1/1. Its function is as follows. May play a key role in the regulation of the intracellular concentration of adenosylhomocysteine. This chain is Adenosylhomocysteinase, found in Janthinobacterium sp. (strain Marseille) (Minibacterium massiliensis).